We begin with the raw amino-acid sequence, 252 residues long: 5-oxoprolinase subunit A 1 (252 aa).

This sequence belongs to the LamB/PxpA family. Forms a complex composed of PxpA, PxpB and PxpC.

The enzyme catalyses 5-oxo-L-proline + ATP + 2 H2O = L-glutamate + ADP + phosphate + H(+). Catalyzes the cleavage of 5-oxoproline to form L-glutamate coupled to the hydrolysis of ATP to ADP and inorganic phosphate. This chain is 5-oxoprolinase subunit A 1, found in Pseudomonas aeruginosa (strain ATCC 15692 / DSM 22644 / CIP 104116 / JCM 14847 / LMG 12228 / 1C / PRS 101 / PAO1).